The chain runs to 150 residues: Interleukin-17A (150 aa).

A signal peptide spans 1-17; it reads MCLMLLLLLNLEATVKA. The segment at 54–75 is disordered; sequence SSRRPSDYLNRSTSPWTLSRNE. Positions 62–72 are enriched in polar residues; the sequence is LNRSTSPWTLS. Residue N63 is glycosylated (N-linked (GlcNAc...) asparagine). Intrachain disulfides connect C89–C139 and C94–C141.

It belongs to the IL-17 family. Homodimer. Forms complexes with IL17RA and IL17RC receptors with 2:1 binding stoichiometry: two receptor chains for one interleukin molecule. IL17A homodimer preferentially drives the formation of IL17RA-IL17RC heterodimeric receptor complex. IL17A homodimer adopts an asymmetrical ternary structure with one IL17RA molecule, allowing for high affinity interactions of one IL17A monomer with one IL17RA molecule (via D1 and D2 domains), while disfavoring binding of a second IL17RA molecule on the other IL17A monomer. Heterodimer with IL17F. IL17A-IL17F forms complexes with IL17RA-IL17RC, but with lower affinity when compared to IL17A homodimer. IL17RA and IL17RC chains cannot distinguish between IL17A and IL17F molecules, potentially enabling the formation of topologically distinct complexes.

Its subcellular location is the secreted. Functionally, effector cytokine of innate and adaptive immune system involved in antimicrobial host defense and maintenance of tissue integrity. Signals via IL17RA-IL17RC heterodimeric receptor complex, triggering homotypic interaction of IL17RA and IL17RC chains with TRAF3IP2 adapter. This leads to downstream TRAF6-mediated activation of NF-kappa-B and MAPkinase pathways ultimately resulting in transcriptional activation of cytokines, chemokines, antimicrobial peptides and matrix metalloproteinases, with potential strong immune inflammation. Plays an important role in connecting T cell-mediated adaptive immunity and acute inflammatory response to destroy extracellular bacteria and fungi. As a signature effector cytokine of T-helper 17 cells (Th17), primarily induces neutrophil activation and recruitment at infection and inflammatory sites. In airway epithelium, mediates neutrophil chemotaxis via induction of CXCL1 and CXCL5 chemokines. In secondary lymphoid organs, contributes to germinal center formation by regulating the chemotactic response of B cells to CXCL12 and CXCL13, enhancing retention of B cells within the germinal centers, B cell somatic hypermutation rate and selection toward plasma cells. Effector cytokine of a subset of gamma-delta T cells that functions as part of an inflammatory circuit downstream IL1B, TLR2 and IL23A-IL12B to promote neutrophil recruitment for efficient bacterial clearance. Effector cytokine of innate immune cells including invariant natural killer cell (iNKT) and group 3 innate lymphoid cells that mediate initial neutrophilic inflammation. Involved in the maintenance of the integrity of epithelial barriers during homeostasis and pathogen infection. Upon acute injury, has a direct role in epithelial barrier formation by regulating OCLN localization and tight junction biogenesis. As part of the mucosal immune response induced by commensal bacteria, enhances host's ability to resist pathogenic bacterial and fungal infections by promoting neutrophil recruitment and antimicrobial peptides release. In synergy with IL17F, mediates the production of antimicrobial beta-defensins DEFB1, DEFB103A, and DEFB104A by mucosal epithelial cells, limiting the entry of microbes through the epithelial barriers. Involved in antiviral host defense through various mechanisms. The polypeptide is Interleukin-17A (Il17a) (Rattus norvegicus (Rat)).